Consider the following 230-residue polypeptide: Inactive 2-(S)-hydroxypropyl-CoM dehydrogenase 2 (230 aa).

The protein belongs to the short-chain dehydrogenases/reductases (SDR) family.

The polypeptide is Inactive 2-(S)-hydroxypropyl-CoM dehydrogenase 2 (Xanthobacter autotrophicus (strain ATCC BAA-1158 / Py2)).